The following is a 160-amino-acid chain: SsrA-binding protein (160 aa).

This sequence belongs to the SmpB family.

Its subcellular location is the cytoplasm. In terms of biological role, required for rescue of stalled ribosomes mediated by trans-translation. Binds to transfer-messenger RNA (tmRNA), required for stable association of tmRNA with ribosomes. tmRNA and SmpB together mimic tRNA shape, replacing the anticodon stem-loop with SmpB. tmRNA is encoded by the ssrA gene; the 2 termini fold to resemble tRNA(Ala) and it encodes a 'tag peptide', a short internal open reading frame. During trans-translation Ala-aminoacylated tmRNA acts like a tRNA, entering the A-site of stalled ribosomes, displacing the stalled mRNA. The ribosome then switches to translate the ORF on the tmRNA; the nascent peptide is terminated with the 'tag peptide' encoded by the tmRNA and targeted for degradation. The ribosome is freed to recommence translation, which seems to be the essential function of trans-translation. The sequence is that of SsrA-binding protein from Proteus mirabilis (strain HI4320).